We begin with the raw amino-acid sequence, 242 residues long: ATP-dependent dethiobiotin synthetase BioD 1 (242 aa).

12-17 contributes to the ATP binding site; it reads NVGKTT. Position 16 (T16) interacts with Mg(2+). K37 is an active-site residue. Position 66 (D66) interacts with ATP. Mg(2+) contacts are provided by D66 and E124. ATP contacts are provided by residues 184–185, 213–215, and E220; these read NR and PYL.

The protein belongs to the dethiobiotin synthetase family. Homodimer. It depends on Mg(2+) as a cofactor.

The protein localises to the cytoplasm. The catalysed reaction is (7R,8S)-7,8-diammoniononanoate + CO2 + ATP = (4R,5S)-dethiobiotin + ADP + phosphate + 3 H(+). The protein operates within cofactor biosynthesis; biotin biosynthesis; biotin from 7,8-diaminononanoate: step 1/2. Catalyzes a mechanistically unusual reaction, the ATP-dependent insertion of CO2 between the N7 and N8 nitrogen atoms of 7,8-diaminopelargonic acid (DAPA, also called 7,8-diammoniononanoate) to form a ureido ring. The polypeptide is ATP-dependent dethiobiotin synthetase BioD 1 (Haemophilus influenzae (strain ATCC 51907 / DSM 11121 / KW20 / Rd)).